Here is a 411-residue protein sequence, read N- to C-terminus: Meiotic driver wtf33 (411 aa).

Residues 1–95 (MKNKYYPLRS…ENHSSGTADN (95 aa)) are disordered. A compositionally biased stretch (basic and acidic residues) spans 11–29 (SMDELSTKNDNEIDLEKGP). Residues 57–72 (GANNPNLFNTDESTTP) are compositionally biased toward polar residues. A run of 6 helical transmembrane segments spans residues 104–124 (AILS…YLTY), 137–157 (WVYF…LWCF), 244–264 (EMMI…FGCV), 281–301 (TISA…WTLW), 303–323 (ALSG…LVNG), and 336–356 (GYEI…LYEM).

The protein belongs to the WTF family. As to quaternary structure, homomer. Forms protein aggregates. The two isoforms can interact with each other and with themselves. High sequence similarity is required for their interaction.

Its subcellular location is the spore membrane. It is found in the vacuole membrane. The protein resides in the ascus epiplasm. The protein localises to the cytoplasm. It localises to the endoplasmic reticulum membrane. Functionally, promotes unequal transmission of alleles from the parental zygote to progeny spores by acting as poison/antidote system where the poison and antidote proteins are produced from the same locus; the poison component is trans-acting and targets all spores within an ascus whereas the antidote component is spore-specific, leading to poisoning of all progeny that do not inherit the allele. Localizes isoform 2 to the vacuole thereby facilitating its degradation. In terms of biological role, forms toxic aggregates that disrupt spore maturation. This chain is Meiotic driver wtf33, found in Schizosaccharomyces kambucha (Fission yeast).